The chain runs to 90 residues: WAP four-disulfide core domain protein 12 (90 aa).

The first 23 residues, 1–23 (MGSSSFLVLMVSLALVTLVAVEG), serve as a signal peptide directing secretion. The region spanning 27–74 (GIEKAGVCPADNVRCFKSDPPQCHTDQDCLGERKCCYLHCGFKCVIPV) is the WAP domain. Cystine bridges form between C34-C62, C41-C66, C49-C61, and C55-C70.

The protein resides in the secreted. Antibacterial protein. Putative acid-stable proteinase inhibitor. This is WAP four-disulfide core domain protein 12 (WFDC12) from Gorilla gorilla gorilla (Western lowland gorilla).